The chain runs to 25 residues: Snaclec bothroalternin subunit alpha/beta (25 aa).

In terms of domain architecture, C-type lectin spans 1 to 25; that stretch reads DCPSDWSNHEGHCYRVFNEWMNWAD. Cys2 and Cys13 are oxidised to a cystine.

It belongs to the snaclec family. As to quaternary structure, heterodimer of subunits alpha and beta; disulfide-linked. In terms of tissue distribution, expressed by the venom gland.

It localises to the secreted. Thrombin (F2) inhibitor that inhibits aggregation of rabbit platelets induced by alpha-thrombin. This is Snaclec bothroalternin subunit alpha/beta from Bothrops alternatus (Urutu).